The chain runs to 1759 residues: Collagen alpha-1(IV) chain (1759 aa).

A signal peptide spans Met-1–Cys-20. The propeptide at Gln-21–Lys-194 is N-terminal propeptide (7S domain). Disordered regions lie at residues Pro-51–Pro-245, Lys-269–Gly-415, Ala-548–Pro-596, Pro-618–Gly-650, Ile-666–Pro-720, and Arg-787–Gly-1522. Composition is skewed to low complexity over residues His-104–Leu-116, Pro-140–Pro-153, and Pro-278–Lys-293. Positions Gly-195–Trp-1530 are triple-helical region. 3 stretches are compositionally biased toward gly residues: residues Gly-324–Gly-345, Gly-360–Gly-370, and Gly-379–Gly-388. Low complexity-rich tracts occupy residues Arg-399 to Pro-411 and Met-574 to Leu-595. Low complexity predominate over residues Tyr-833–Pro-848. The segment covering Gly-904–Gly-913 has biased composition (gly residues). Low complexity-rich tracts occupy residues Tyr-1037 to Pro-1047, Glu-1219 to Pro-1232, Pro-1247 to Asp-1271, and Gln-1281 to Pro-1309. The segment covering Gly-1310 to Gly-1319 has biased composition (gly residues). The span at Leu-1341–Glu-1357 shows a compositional bias: low complexity. A compositionally biased stretch (basic and acidic residues) spans Pro-1410–Leu-1422. Low complexity-rich tracts occupy residues Asp-1423–Pro-1437 and Pro-1472–Pro-1482. The span at Gly-1495–Gly-1504 shows a compositional bias: gly residues. The 225-residue stretch at Gly-1535 to Arg-1759 folds into the Collagen IV NC1 domain. Cystine bridges form between Cys-1550-Cys-1641, Cys-1583-Cys-1638, Cys-1595-Cys-1601, Cys-1660-Cys-1755, Cys-1694-Cys-1752, and Cys-1706-Cys-1712. Met-1623 is covalently cross-linked (S-Lysyl-methionine sulfilimine (Met-Lys) (interchain with K-1741)). Lys-1741 is covalently cross-linked (S-Lysyl-methionine sulfilimine (Lys-Met) (interchain with M-1623)).

It belongs to the type IV collagen family. In terms of assembly, trimers of two alpha 1(IV) and one alpha 2(IV) chain. Type IV collagen forms a mesh-like network linked through intermolecular interactions between 7S domains and between NC1 domains. Prolines at the third position of the tripeptide repeating unit (G-X-Y) are hydroxylated in some or all of the chains. Post-translationally, type IV collagens contain numerous cysteine residues which are involved in inter- and intramolecular disulfide bonding. 12 of these, located in the NC1 domain, are conserved in all known type IV collagens. In terms of processing, the trimeric structure of the NC1 domains is stabilized by covalent bonds between Lys and Met residues.

It is found in the secreted. The protein resides in the extracellular space. Its subcellular location is the extracellular matrix. The protein localises to the basement membrane. Functionally, collagen type IV is specific for basement membranes. Required to restrict presynaptic growth at the neuromuscular junctions (NMJ) in late larval stage and in adult motor neurons. May play a role in axon regeneration in embryos following injury in D-type motor neurons. In Caenorhabditis elegans, this protein is Collagen alpha-1(IV) chain.